We begin with the raw amino-acid sequence, 627 residues long: DNA-directed RNA polymerase subunit gamma (627 aa).

Positions 70, 72, 85, and 88 each coordinate Zn(2+). Positions 468, 470, and 472 each coordinate Mg(2+).

Belongs to the RNA polymerase beta' chain family. RpoC1 subfamily. In terms of assembly, in cyanobacteria the RNAP catalytic core is composed of 2 alpha, 1 beta, 1 beta', 1 gamma and 1 omega subunit. When a sigma factor is associated with the core the holoenzyme is formed, which can initiate transcription. The cofactor is Mg(2+). Requires Zn(2+) as cofactor.

The catalysed reaction is RNA(n) + a ribonucleoside 5'-triphosphate = RNA(n+1) + diphosphate. Its function is as follows. DNA-dependent RNA polymerase catalyzes the transcription of DNA into RNA using the four ribonucleoside triphosphates as substrates. The chain is DNA-directed RNA polymerase subunit gamma from Synechococcus sp. (strain JA-2-3B'a(2-13)) (Cyanobacteria bacterium Yellowstone B-Prime).